Consider the following 455-residue polypeptide: GTPase Der (455 aa).

2 EngA-type G domains span residues 4–169 and 178–353; these read PVVA…PPKD and IQLS…EQHR. GTP contacts are provided by residues 10 to 17, 57 to 61, 120 to 123, 184 to 191, 231 to 235, and 296 to 299; these read GRPNVGKS, DTGGL, NKCE, DTAGI, and NKWD. The 86-residue stretch at 354-439 folds into the KH-like domain; it reads RRVSTSVVNE…PVKLFWRGKQ (86 aa).

Belongs to the TRAFAC class TrmE-Era-EngA-EngB-Septin-like GTPase superfamily. EngA (Der) GTPase family. In terms of assembly, associates with the 50S ribosomal subunit.

Its function is as follows. GTPase that plays an essential role in the late steps of ribosome biogenesis. The chain is GTPase Der from Synechococcus sp. (strain CC9311).